A 350-amino-acid polypeptide reads, in one-letter code: SUMO-activating enzyme subunit 1 (350 aa).

Methionine 1 is subject to N-acetylmethionine. At valine 2 the chain carries N-acetylvaline; in SUMO-activating enzyme subunit 1, N-terminally processed. Position 16 is a phosphoserine (serine 16). Position 202 is an N6-acetyllysine (lysine 202).

It belongs to the ubiquitin-activating E1 family. In terms of assembly, heterodimer of SAE1 and UBA2/SAE2. The heterodimer corresponds to the two domains that are encoded on a single polypeptide chain in ubiquitin-activating enzyme E1. Interacts with UBE2I. As to expression, broadly expressed, with highest levels in testis.

The protein localises to the nucleus. It functions in the pathway protein modification; protein sumoylation. Functionally, the heterodimer acts as an E1 ligase for SUMO1, SUMO2, SUMO3, and probably SUMO4. It mediates ATP-dependent activation of SUMO proteins followed by formation of a thioester bond between a SUMO protein and a conserved active site cysteine residue on UBA2/SAE2. This chain is SUMO-activating enzyme subunit 1 (Sae1), found in Mus musculus (Mouse).